We begin with the raw amino-acid sequence, 831 residues long: Heat shock 70 kDa protein 15 (831 aa).

Disordered regions lie at residues 502–579 (EEEV…KKKV) and 784–831 (IMTK…EGST). The segment covering 512–526 (DQSEETAKMDTDKAS) has biased composition (basic and acidic residues). 2 positions are modified to phosphoserine: Ser533 and Ser536. Low complexity predominate over residues 787 to 800 (KPKPAAKAEAPQAK).

The protein belongs to the heat shock protein 70 (TC 1.A.33) family. HSP110/SSE subfamily.

It is found in the cytoplasm. Its subcellular location is the nucleus. Its function is as follows. In cooperation with other chaperones, Hsp70s are key components that facilitate folding of de novo synthesized proteins, assist translocation of precursor proteins into organelles, and are responsible for degradation of damaged protein under stress conditions. The protein is Heat shock 70 kDa protein 15 (HSP70-15) of Arabidopsis thaliana (Mouse-ear cress).